The sequence spans 693 residues: Glycine--tRNA ligase beta subunit (693 aa).

The protein belongs to the class-II aminoacyl-tRNA synthetase family. As to quaternary structure, tetramer of two alpha and two beta subunits.

Its subcellular location is the cytoplasm. It catalyses the reaction tRNA(Gly) + glycine + ATP = glycyl-tRNA(Gly) + AMP + diphosphate. The protein is Glycine--tRNA ligase beta subunit of Vibrio campbellii (strain ATCC BAA-1116).